Consider the following 501-residue polypeptide: Probable cytochrome P450 28d2 (501 aa).

C446 lines the heme pocket.

This sequence belongs to the cytochrome P450 family. Heme serves as cofactor.

It is found in the endoplasmic reticulum membrane. The protein resides in the microsome membrane. Functionally, may be involved in the metabolism of insect hormones and in the breakdown of synthetic insecticides. This is Probable cytochrome P450 28d2 (Cyp28d2) from Drosophila melanogaster (Fruit fly).